Here is a 395-residue protein sequence, read N- to C-terminus: Acid ceramidase (395 aa).

The signal sequence occupies residues 1-21; it reads MLGRSRLTFVLLAAAVTCAEA. Cys-31 and Cys-340 form a disulfide bridge. Catalysis depends on Cys-143, which acts as the Nucleophile. N-linked (GlcNAc...) asparagine glycosylation is found at Asn-173, Asn-259, Asn-286, and Asn-348. An intrachain disulfide couples Cys-388 to Cys-392.

Belongs to the acid ceramidase family. As to quaternary structure, heterodimer; disulfide-linked. The heterodimer is composed of the disulfide-linked alpha and beta chains produced by autocatalytic cleavage of the precursor. N-glycosylated. Post-translationally, proteolytically cleaved into two chains alpha and beta that remain associated via a disulfide bond. Cleavage gives rise to a conformation change that activates the enzyme. The same catalytic Cys residue mediates the autoproteolytic cleavage and subsequent hydrolysis of lipid substrates. The beta chain may undergo an additional C-terminal processing.

The protein localises to the lysosome. The protein resides in the secreted. The catalysed reaction is an N-acylsphing-4-enine + H2O = sphing-4-enine + a fatty acid. It carries out the reaction N-dodecanoylsphing-4-enine + H2O = dodecanoate + sphing-4-enine. It catalyses the reaction N-tetradecanoylsphing-4-enine + H2O = tetradecanoate + sphing-4-enine. The enzyme catalyses N-hexadecanoylsphing-4-enine + H2O = sphing-4-enine + hexadecanoate. The catalysed reaction is N-octadecanoylsphing-4-enine + H2O = sphing-4-enine + octadecanoate. It carries out the reaction N-dodecanoyl-(4R)-hydroxysphinganine + H2O = (4R)-hydroxysphinganine + dodecanoate. It catalyses the reaction N-(dodecanoyl)-sphinganine + H2O = dodecanoate + sphinganine. The enzyme catalyses N-(acetyl)-sphing-4-enine + H2O = sphing-4-enine + acetate. The catalysed reaction is N-(hexanoyl)sphing-4-enine + H2O = hexanoate + sphing-4-enine. It carries out the reaction N-octanoylsphing-4-enine + H2O = octanoate + sphing-4-enine. It catalyses the reaction N-(9Z-octadecenoyl)-sphing-4-enine + H2O = sphing-4-enine + (9Z)-octadecenoate. The enzyme catalyses N-dodecanoylethanolamine + H2O = dodecanoate + ethanolamine. Its pathway is lipid metabolism; sphingolipid metabolism. Its function is as follows. Lysosomal ceramidase that hydrolyzes sphingolipid ceramides into sphingosine and free fatty acids at acidic pH. Ceramides, sphingosine, and its phosphorylated form sphingosine-1-phosphate are bioactive lipids that mediate cellular signaling pathways regulating several biological processes including cell proliferation, apoptosis and differentiation. Has a higher catalytic efficiency towards C12-ceramides versus other ceramides. Also catalyzes the reverse reaction allowing the synthesis of ceramides from fatty acids and sphingosine. For the reverse synthetic reaction, the natural sphingosine D-erythro isomer is more efficiently utilized as a substrate compared to D-erythro-dihydrosphingosine and D-erythro-phytosphingosine, while the fatty acids with chain lengths of 12 or 14 carbons are the most efficiently used. Also has an N-acylethanolamine hydrolase activity. By regulating the levels of ceramides, sphingosine and sphingosine-1-phosphate in the epidermis, mediates the calcium-induced differentiation of epidermal keratinocytes. Also indirectly regulates tumor necrosis factor/TNF-induced apoptosis. By regulating the intracellular balance between ceramides and sphingosine, in adrenocortical cells, probably also acts as a regulator of steroidogenesis. The chain is Acid ceramidase from Heterocephalus glaber (Naked mole rat).